Reading from the N-terminus, the 218-residue chain is Small ribosomal subunit protein uS3c (218 aa).

The KH type-2 domain occupies V47–E118.

The protein belongs to the universal ribosomal protein uS3 family. Part of the 30S ribosomal subunit.

It localises to the plastid. The protein localises to the chloroplast. The chain is Small ribosomal subunit protein uS3c (rps3) from Anthoceros angustus (Hornwort).